Reading from the N-terminus, the 1547-residue chain is MYAAVEHGPVLCSDSNILCLSWKGRVPKSEKEKPVCRRRYYEEGWLATGNGRGVVGVTFTSSHCRRDRSTPQRINFNLRGHNSEVVLVRWNEPYQKLATCDADGGIFVWIQYEGRWSVELVNDRGAQVSDFTWSHDGTQALISYRDGFVLVGSVSGQRHWSSEINLESQITCGIWTPDDQQVLFGTADGQVIVMDCHGRMLAHVLLHESDGILSMSWNYPIFLVEDSSESDTDSDDYSPPQDGPAAYPIPVQNTKPLLTVSFTSGDISLMNNYDDLSPTVIRSGLKEVVAQWCTQGDLLAVAGMEQQAQLSELPNGPLLKSAMVKFYNVRGEHIFTLDTLVQRPIISICWGHRDSRLLMASGPALYVVRVEHRVSSLQLLCQQAIASTLREDKDVNKLTLPPRLCSYLSTAFIPTIKPPIPDPNNMRDFVSYPSAGNERLHCTMKRTEDDPEVGGPCYTLYLEYLGGLVPILKGRRISKLRPEFVIMDPRTDSKSDEIYGNSLISTVIDSCNCSDSSDIELSDDWAAKKSPKISRSSKSPKLPRISIEARKSPKLPRAAQEISRSPRLPMRKPSMGSPSLTRREFPFEDITQHNYLAQVTSNIWGTKFKIVGLAAFLPTNLGAVIYKTSLLHLQPRQMTIYLPEVRKISMDYINLPVFNPNVFSEDEDDLPVTGASGVPENNPPCTVNIPIAPIHSSAQALSPTQSIGLVQSLLANQNVQLDVLTNQTTAVGSAEHAGDAATQYPVSSRYSNPGQVIFGGVEMGRIIQNPPQLPLPPPPPPPPQAPMQLSAVDHGDRDHEHLQKSAKALRPVPQLAAEGDAVVFSAPQEVQVAKMNPPPPYPGTIPAAPTTAAPPPPLPPPQPPVDVCLKKGDFSLYPTAAHYQPPLGYERITTFDSSGNVEEVCRPRTRMLCSQNTYTLPGPGSSATLRLTATEKKVPQPCTSATLNRLTVPRYSIPTGDPPPYPEIASQLAQGRSAAQRLDNSLIHATLRRNNREVALKMAQLADSSRAPLQPLAKPKGGAAGAVAQLPARPPPALYTCSQCSGAGPSSQSGAALAHAISTSPLASQSSYNLLSPPDTSRDRTDYVNSAFTEDEALSQHCQLEKPLRHPPLPEAAVTMKRPPPYQWDPMLGEDVWVPQERTAQPTVPNPLKLSPLMLGQGQHLDVARVPFVPPKSPSSPTATFPTGYGMGMPYPGSYNNPSLPGVQAPCSPKDALSQAQFAQQESAVVLQPAYPPSLSYCTLPPTYPGSSTCSSVQLPPIALHPWNSYSTCPPMQNTQGTLPPKPHLVVEKPLVSPPPAELQSHMGTEVMVETADNFQEVLSLTESPVPQRTEKFGKKNRKRLDSRAEEGSVQAITEGKVKKDARTLSDFNSLISSPRLGREKKKVKSQKDQLKSKKLNKTNEFQDSSESEPELFISGDELMNQSQGSKKGWKSKRSLRTASELEEFKCRKASEKEDGRLGSQGFVYVMANKQPLWNEATQVYQLDFGGRVTQESAKNFQIELEGRQVMQFGRIDGNAYILDFQYPFSAVQAFAVALANVTQRLK.

WD repeat units lie at residues 80-119 (GHNS…WSVE), 123-162 (DRGA…HWSS), and 165-204 (NLES…LAHV). An SOCS box domain is found at 364 to 414 (ALYVVRVEHRVSSLQLLCQQAIASTLREDKDVNKLTLPPRLCSYLSTAFIP). The segment at 530-580 (SPKISRSSKSPKLPRISIEARKSPKLPRAAQEISRSPRLPMRKPSMGSPSL) is disordered. Low complexity predominate over residues 533-546 (ISRSSKSPKLPRIS). The residue at position 577 (S577) is a Phosphoserine. R949 and R954 each carry asymmetric dimethylarginine. Residues S1347 and S1378 each carry the phosphoserine modification. Positions 1374–1414 (SLISSPRLGREKKKVKSQKDQLKSKKLNKTNEFQDSSESEP) are disordered. The TUB stretch occupies residues 1436–1547 (SKRSLRTASE…ALANVTQRLK (112 aa)).

It belongs to the TUB family.

The protein resides in the cytoplasm. The protein operates within protein modification; protein ubiquitination. May be a substrate-recognition component of a SCF-like ECS (Elongin-Cullin-SOCS-box protein) E3 ubiquitin ligase complex which mediates the ubiquitination and subsequent proteasomal degradation of target proteins. This is Tubby-related protein 4 (Tulp4) from Mus musculus (Mouse).